A 430-amino-acid chain; its full sequence is Mitochondrial distribution and morphology protein 10 (430 aa).

The span at 215 to 234 (SSSAMNPPSGTSASETNGSG) shows a compositional bias: polar residues. 2 disordered regions span residues 215 to 237 (SSSAMNPPSGTSASETNGSGPSV) and 339 to 393 (LGAN…GPKE).

The protein belongs to the MDM10 family. In terms of assembly, component of the ER-mitochondria encounter structure (ERMES) or MDM complex, composed of MMM1, MDM10, MDM12 and MDM34. Associates with the mitochondrial outer membrane sorting assembly machinery SAM(core) complex.

The protein resides in the mitochondrion outer membrane. Functionally, component of the ERMES/MDM complex, which serves as a molecular tether to connect the endoplasmic reticulum and mitochondria. Components of this complex are involved in the control of mitochondrial shape and protein biogenesis and may function in phospholipid exchange. MDM10 is involved in the late assembly steps of the general translocase of the mitochondrial outer membrane (TOM complex). Functions in the TOM40-specific route of the assembly of outer membrane beta-barrel proteins, including the association of TOM40 with the receptor TOM22 and small TOM proteins. Can associate with the SAM(core) complex as well as the MDM12-MMM1 complex, both involved in late steps of the major beta-barrel assembly pathway, that is responsible for biogenesis of all outer membrane beta-barrel proteins. May act as a switch that shuttles between both complexes and channels precursor proteins into the TOM40-specific pathway. Plays a role in mitochondrial morphology and in the inheritance of mitochondria. In Chaetomium globosum (strain ATCC 6205 / CBS 148.51 / DSM 1962 / NBRC 6347 / NRRL 1970) (Soil fungus), this protein is Mitochondrial distribution and morphology protein 10.